The primary structure comprises 720 residues: Polyribonucleotide nucleotidyltransferase (720 aa).

Asp485 and Asp491 together coordinate Mg(2+). Residues 552 to 615 enclose the KH domain; sequence PRIHTIKINP…EAIRRIQALT (64 aa). The S1 motif domain maps to 621-689; it reads GRIYEGKVTR…RQGRIRLSIK (69 aa). Positions 697–720 are disordered; sequence PAAESVAESAPAQEAVVEQVPMTE. Over residues 698-720 the composition is skewed to low complexity; sequence AAESVAESAPAQEAVVEQVPMTE.

Belongs to the polyribonucleotide nucleotidyltransferase family. In terms of assembly, component of the RNA degradosome, which is a multiprotein complex involved in RNA processing and mRNA degradation. Mg(2+) is required as a cofactor.

It is found in the cytoplasm. The enzyme catalyses RNA(n+1) + phosphate = RNA(n) + a ribonucleoside 5'-diphosphate. Functionally, involved in mRNA degradation. Catalyzes the phosphorolysis of single-stranded polyribonucleotides processively in the 3'- to 5'-direction. This is Polyribonucleotide nucleotidyltransferase from Tolumonas auensis (strain DSM 9187 / NBRC 110442 / TA 4).